The following is a 242-amino-acid chain: ATP-dependent dethiobiotin synthetase BioD (242 aa).

Residue 12–17 (EVGKTV) coordinates ATP. Threonine 16 lines the Mg(2+) pocket. The active site involves lysine 37. Serine 41 lines the substrate pocket. Residues aspartate 51 and 112 to 115 (EGAG) contribute to the ATP site. Mg(2+) is bound by residues aspartate 51 and glutamate 112.

Belongs to the dethiobiotin synthetase family. Homodimer. It depends on Mg(2+) as a cofactor.

It is found in the cytoplasm. It carries out the reaction (7R,8S)-7,8-diammoniononanoate + CO2 + ATP = (4R,5S)-dethiobiotin + ADP + phosphate + 3 H(+). It functions in the pathway cofactor biosynthesis; biotin biosynthesis; biotin from 7,8-diaminononanoate: step 1/2. In terms of biological role, catalyzes a mechanistically unusual reaction, the ATP-dependent insertion of CO2 between the N7 and N8 nitrogen atoms of 7,8-diaminopelargonic acid (DAPA, also called 7,8-diammoniononanoate) to form a ureido ring. In Bacillus anthracis (strain A0248), this protein is ATP-dependent dethiobiotin synthetase BioD.